The chain runs to 519 residues: Probable DNA ligase (519 aa).

E221 lines the ATP pocket. K223 functions as the N6-AMP-lysine intermediate in the catalytic mechanism. Residues R228, R243, E272, F312, R384, and K390 each coordinate ATP.

The protein belongs to the ATP-dependent DNA ligase family. Mg(2+) is required as a cofactor.

It catalyses the reaction ATP + (deoxyribonucleotide)n-3'-hydroxyl + 5'-phospho-(deoxyribonucleotide)m = (deoxyribonucleotide)n+m + AMP + diphosphate.. Its function is as follows. DNA ligase that seals nicks in double-stranded DNA during DNA replication, DNA recombination and DNA repair. The protein is Probable DNA ligase of Mycolicibacterium paratuberculosis (strain ATCC BAA-968 / K-10) (Mycobacterium paratuberculosis).